The following is a 465-amino-acid chain: Ribulose bisphosphate carboxylase large chain (465 aa).

Residue K4 is modified to N6,N6,N6-trimethyllysine. N113 and T163 together coordinate substrate. K165 serves as the catalytic Proton acceptor. Residue K167 participates in substrate binding. K191, D193, and E194 together coordinate Mg(2+). An N6-carboxylysine modification is found at K191. H284 serves as the catalytic Proton acceptor. 3 residues coordinate substrate: R285, H317, and S369.

Belongs to the RuBisCO large chain family. Type I subfamily. Heterohexadecamer of 8 large chains and 8 small chains; disulfide-linked. The disulfide link is formed within the large subunit homodimers. Mg(2+) serves as cofactor. Post-translationally, the disulfide bond which can form in the large chain dimeric partners within the hexadecamer appears to be associated with oxidative stress and protein turnover.

It localises to the plastid. The protein localises to the chloroplast. The enzyme catalyses 2 (2R)-3-phosphoglycerate + 2 H(+) = D-ribulose 1,5-bisphosphate + CO2 + H2O. It catalyses the reaction D-ribulose 1,5-bisphosphate + O2 = 2-phosphoglycolate + (2R)-3-phosphoglycerate + 2 H(+). Functionally, ruBisCO catalyzes two reactions: the carboxylation of D-ribulose 1,5-bisphosphate, the primary event in carbon dioxide fixation, as well as the oxidative fragmentation of the pentose substrate in the photorespiration process. Both reactions occur simultaneously and in competition at the same active site. In Clitoria ternatea (Butterfly pea), this protein is Ribulose bisphosphate carboxylase large chain.